The primary structure comprises 151 residues: 3-hydroxyacyl-[acyl-carrier-protein] dehydratase FabZ (151 aa).

The active site involves histidine 52.

This sequence belongs to the thioester dehydratase family. FabZ subfamily.

Its subcellular location is the cytoplasm. It carries out the reaction a (3R)-hydroxyacyl-[ACP] = a (2E)-enoyl-[ACP] + H2O. Involved in unsaturated fatty acids biosynthesis. Catalyzes the dehydration of short chain beta-hydroxyacyl-ACPs and long chain saturated and unsaturated beta-hydroxyacyl-ACPs. The chain is 3-hydroxyacyl-[acyl-carrier-protein] dehydratase FabZ (fabZ1) from Lactococcus lactis subsp. lactis (strain IL1403) (Streptococcus lactis).